A 331-amino-acid polypeptide reads, in one-letter code: T-cell acute lymphocytic leukemia protein 1 (331 aa).

Positions 1 to 22 are enriched in basic and acidic residues; the sequence is MTERPPSEAARSDPQLEGRDAA. 2 disordered regions span residues 1–27 and 40–86; these read MTER…ASMA and ETSR…EARH. A Phosphoserine modification is found at Ser-12. Residues 56–70 show a composition bias toward gly residues; the sequence is ARGGPGGGPAGGGGA. Basic and acidic residues predominate over residues 72–86; that stretch reads RDLKGRDAATAEARH. Ser-122 and Ser-172 each carry phosphoserine. The region spanning 187–239 is the bHLH domain; that stretch reads VRRIFTNSRERWRQQNVNGAFAELRKLIPTHPPDKKLSKNEILRLAMKYINFL. A disordered region spans residues 249 to 331; it reads EGTQRAKTGK…LPAADGAGPR (83 aa). Gly residues predominate over residues 263–275; the sequence is GAGGGGGGGGGGA.

In terms of assembly, efficient DNA binding requires dimerization with another bHLH protein. Forms heterodimers with TCF3. Binds to the LIM domain containing protein LMO2 and to DRG1. Can assemble in a complex with LDB1 and LMO2. Component of a TAL-1 complex composed at least of CBFA2T3, LDB1, TAL1 and TCF3. Interacts with SBNO2; this interaction inhibits TAL1 occupancy of the DCSTAMP promoter, leading to the activation of the DCSTAMP promoter by the transcription factor MITF. Phosphorylated on serine residues. Phosphorylation of Ser-122 is strongly stimulated by hypoxia. In terms of processing, ubiquitinated; subsequent to hypoxia-dependent phosphorylation of Ser-122, ubiquitination targets the protein for rapid degradation via the ubiquitin system. This process may be characteristic for microvascular endothelial cells, since it could not be observed in large vessel endothelial cells. In terms of tissue distribution, leukemic stem cell.

It is found in the nucleus. In terms of biological role, implicated in the genesis of hemopoietic malignancies. It may play an important role in hemopoietic differentiation. Serves as a positive regulator of erythroid differentiation. This is T-cell acute lymphocytic leukemia protein 1 (TAL1) from Homo sapiens (Human).